Reading from the N-terminus, the 233-residue chain is Eosinophil granule major basic protein 1 (233 aa).

Positions 1–15 are cleaved as a signal peptide; the sequence is MKLLLLLALLLGAVS. Positions 16–114 are cleaved as a propeptide — acidic; that stretch reads TRHLKVDTSS…VKFFSRPGYK (99 aa). The disordered stretch occupies residues 24-96; that stretch reads SSLQSLRGEE…SELDVSPEDI (73 aa). The segment covering 42-57 has biased composition (low complexity); it reads AEGATREATAGALMPL. Positions 58-93 are enriched in acidic residues; that stretch reads PEEEEMEGASGSEDDPEEEEEEEEEVEFSSELDVSP. Residues 132–233 form the C-type lectin domain; the sequence is WVCQRCYRGN…GKRRPFVCTY (102 aa). 2 disulfide bridges follow: cysteine 134-cysteine 231 and cysteine 208-cysteine 223.

In terms of processing, nitrated.

Its subcellular location is the cytoplasmic granule. In terms of biological role, MBP may play some important roles in the allergic reactions and inflammations, since MBP is capable of releasing histamine from mast cells and damaging the epithelial cells of bronchial tubes. Antiparasitic and antibiotic. The chain is Eosinophil granule major basic protein 1 (MBP1) from Cavia porcellus (Guinea pig).